The primary structure comprises 76 residues: MKLTCMVIVAVLFLTANTFVTAVPHSSNALENLYLKAHHEMNNPKDSELNKRCYDGGTGCDSGNQCCSGWCIFVCL.

Residues 1–22 (MKLTCMVIVAVLFLTANTFVTA) form the signal peptide. Residues 23-52 (VPHSSNALENLYLKAHHEMNNPKDSELNKR) constitute a propeptide that is removed on maturation. Cystine bridges form between cysteine 53-cysteine 67, cysteine 60-cysteine 71, and cysteine 66-cysteine 75.

The protein belongs to the conotoxin O1 superfamily. Expressed by the venom duct.

Its subcellular location is the secreted. The protein is Conotoxin Vc6.6 of Conus victoriae (Queen Victoria cone).